The chain runs to 380 residues: Homeobox protein ceh-6 (380 aa).

Over residues 1 to 25 the composition is skewed to low complexity; the sequence is MLIPSSSSIPSSLSASASDSEPSSL. Disordered stretches follow at residues 1–31, 167–190, and 265–286; these read MLIP…SGIS, SGSV…SEQT, and GSPN…KKRT. The POU-specific domain maps to 187–261; sequence SEQTCPDDLE…LLFKWLEEAD (75 aa). A DNA-binding region (homeobox) is located at residues 281 to 340; that stretch reads KRKKRTSIEVNVKSRLEFHFQSNQKPNAQEITQVAMELQLEKEVVRVWFCNRRQKEKRIA.

Belongs to the POU transcription factor family. Class-3 subfamily. As to quaternary structure, interacts with egl-27, sox-2 and sem-4. Interacts with wdr-5.1. As to expression, expressed in a series of neurons in the ring ganglia, excretory cell, dividing neuroblasts in the ventral cord and rectal cells.

It is found in the nucleus. Its function is as follows. Vital for embryonic development and essential for the proper function of the excretory cell. Required for the transdifferentiation of the Y rectal epithelial cell to the PDA motor neuron during larval development. The protein is Homeobox protein ceh-6 of Caenorhabditis elegans.